Here is a 265-residue protein sequence, read N- to C-terminus: Undecaprenyl-diphosphatase (265 aa).

7 helical membrane passes run 41-61 (IAYT…LIYF), 75-95 (LKFL…LYVI), 104-124 (YNPS…GIYI), 137-157 (LSTK…LPGV), 180-200 (YSYL…LLFT), 215-235 (GIAL…GFLL), and 244-264 (YLID…GLII).

It belongs to the UppP family.

The protein resides in the cell membrane. The enzyme catalyses di-trans,octa-cis-undecaprenyl diphosphate + H2O = di-trans,octa-cis-undecaprenyl phosphate + phosphate + H(+). Catalyzes the dephosphorylation of undecaprenyl diphosphate (UPP). In Saccharolobus islandicus (strain Y.N.15.51 / Yellowstone #2) (Sulfolobus islandicus), this protein is Undecaprenyl-diphosphatase.